The following is a 187-amino-acid chain: Elongation factor P (187 aa).

Belongs to the elongation factor P family.

The protein localises to the cytoplasm. It participates in protein biosynthesis; polypeptide chain elongation. In terms of biological role, involved in peptide bond synthesis. Stimulates efficient translation and peptide-bond synthesis on native or reconstituted 70S ribosomes in vitro. Probably functions indirectly by altering the affinity of the ribosome for aminoacyl-tRNA, thus increasing their reactivity as acceptors for peptidyl transferase. The protein is Elongation factor P of Corynebacterium glutamicum (strain R).